The sequence spans 344 residues: Leucine-rich repeat-containing protein 75A (344 aa).

Residues 1–25 form a disordered region; the sequence is MGTRQTKGSLAERASPGAAPGPRRE. Positions 11–21 are enriched in low complexity; sequence AERASPGAAPG. 2 LRR repeats span residues 204 to 217 and 229 to 242; these read VDSV…LTDD and LPRL…GNRL. Positions 295 to 344 are disordered; that stretch reads LPTILELGEGPGSGEEVREGTVGQEDPGGGPVAPAEDHHEGKETVAAAQT.

The protein belongs to the LRRC75 family.

In Homo sapiens (Human), this protein is Leucine-rich repeat-containing protein 75A (LRRC75A).